A 521-amino-acid chain; its full sequence is Apolipoprotein N-acyltransferase (521 aa).

The next 5 membrane-spanning stretches (helical) occupy residues 24-44 (IKET…FIAL), 71-91 (WLGF…IGYI), 128-148 (IGFL…FNNL), 151-171 (IADI…NSGI), and 182-202 (NLLN…YGMI). The CN hydrolase domain occupies 218–472 (LNIAAIQLNT…KGYLLSTVKL (255 aa)). Glu263 acts as the Proton acceptor in catalysis. Lys331 is an active-site residue. Cys383 functions as the Nucleophile in the catalytic mechanism.

This sequence belongs to the CN hydrolase family. Apolipoprotein N-acyltransferase subfamily.

The protein resides in the cell inner membrane. It carries out the reaction N-terminal S-1,2-diacyl-sn-glyceryl-L-cysteinyl-[lipoprotein] + a glycerophospholipid = N-acyl-S-1,2-diacyl-sn-glyceryl-L-cysteinyl-[lipoprotein] + a 2-acyl-sn-glycero-3-phospholipid + H(+). It functions in the pathway protein modification; lipoprotein biosynthesis (N-acyl transfer). In terms of biological role, catalyzes the phospholipid dependent N-acylation of the N-terminal cysteine of apolipoprotein, the last step in lipoprotein maturation. In Borreliella burgdorferi (strain ATCC 35210 / DSM 4680 / CIP 102532 / B31) (Borrelia burgdorferi), this protein is Apolipoprotein N-acyltransferase.